The primary structure comprises 177 residues: Cell division protein ZapC (177 aa).

This sequence belongs to the ZapC family. In terms of assembly, interacts directly with FtsZ.

It localises to the cytoplasm. Contributes to the efficiency of the cell division process by stabilizing the polymeric form of the cell division protein FtsZ. Acts by promoting interactions between FtsZ protofilaments and suppressing the GTPase activity of FtsZ. This is Cell division protein ZapC from Shewanella oneidensis (strain ATCC 700550 / JCM 31522 / CIP 106686 / LMG 19005 / NCIMB 14063 / MR-1).